A 103-amino-acid chain; its full sequence is Small ribosomal subunit protein uS10 (103 aa).

This sequence belongs to the universal ribosomal protein uS10 family. As to quaternary structure, part of the 30S ribosomal subunit.

Functionally, involved in the binding of tRNA to the ribosomes. The polypeptide is Small ribosomal subunit protein uS10 (Acidovorax sp. (strain JS42)).